The primary structure comprises 688 residues: Glycine--tRNA ligase beta subunit (688 aa).

It belongs to the class-II aminoacyl-tRNA synthetase family. In terms of assembly, tetramer of two alpha and two beta subunits.

The protein resides in the cytoplasm. The enzyme catalyses tRNA(Gly) + glycine + ATP = glycyl-tRNA(Gly) + AMP + diphosphate. In Syntrophotalea carbinolica (strain DSM 2380 / NBRC 103641 / GraBd1) (Pelobacter carbinolicus), this protein is Glycine--tRNA ligase beta subunit.